Here is a 66-residue protein sequence, read N- to C-terminus: Large ribosomal subunit protein bL31 (66 aa).

Zn(2+)-binding residues include cysteine 16, cysteine 18, cysteine 36, and cysteine 39.

It belongs to the bacterial ribosomal protein bL31 family. Type A subfamily. In terms of assembly, part of the 50S ribosomal subunit. The cofactor is Zn(2+).

Its function is as follows. Binds the 23S rRNA. The sequence is that of Large ribosomal subunit protein bL31 from Campylobacter fetus subsp. fetus (strain 82-40).